Here is a 166-residue protein sequence, read N- to C-terminus: Regulator of ribonuclease activity A (166 aa).

It belongs to the RraA family. Homotrimer. Binds to both RNA-binding sites in the C-terminal region of Rne and to RhlB.

The protein resides in the cytoplasm. Its function is as follows. Globally modulates RNA abundance by binding to RNase E (Rne) and regulating its endonucleolytic activity. Can modulate Rne action in a substrate-dependent manner by altering the composition of the degradosome. Modulates RNA-binding and helicase activities of the degradosome. The sequence is that of Regulator of ribonuclease activity A from Histophilus somni (strain 129Pt) (Haemophilus somnus).